We begin with the raw amino-acid sequence, 123 residues long: Large ribosomal subunit protein bL12 (123 aa).

The protein belongs to the bacterial ribosomal protein bL12 family. In terms of assembly, homodimer. Part of the ribosomal stalk of the 50S ribosomal subunit. Forms a multimeric L10(L12)X complex, where L10 forms an elongated spine to which 2 to 4 L12 dimers bind in a sequential fashion. Binds GTP-bound translation factors.

Its function is as follows. Forms part of the ribosomal stalk which helps the ribosome interact with GTP-bound translation factors. Is thus essential for accurate translation. The sequence is that of Large ribosomal subunit protein bL12 from Metamycoplasma arthritidis (strain 158L3-1) (Mycoplasma arthritidis).